Reading from the N-terminus, the 551-residue chain is TRAF3-interacting JNK-activating modulator (551 aa).

Over 1 to 526 (MISPDPRPSP…QLPPRRQCGR (526 aa)) the chain is Cytoplasmic. Disordered stretches follow at residues 73–95 (LEEKGKAQHPQAREQGPSRRPGQ) and 140–178 (DHLSSQAGGLPPQDTPIKKPPKHHRGTQTKAEGPTIKND). Coiled-coil stretches lie at residues 240–436 (DKLK…LLTK) and 464–506 (WDLR…RKLQ). Residues 527 to 544 (WLPVLMVVIAAALAVFLA) traverse the membrane as a helical; Anchor for type IV membrane protein segment. Topologically, residues 545–551 (NKDNLMI) are extracellular.

Interacts (via its coiled-coil domain) with TRAF3 (via isoleucine zipper). Interacts with MAP2K1. Interacts with PPP2CA; this interaction targets PPP2CA to the lysosomes. Interacts with TLR4. Interacts with MAVS. Interacts with TBK1.

The protein localises to the cell membrane. It is found in the golgi apparatus membrane. Its subcellular location is the lysosome membrane. The protein resides in the mitochondrion outer membrane. Its function is as follows. Adapter protein that plays essential roles in both innate and adaptive immunity. Plays a crucial role in the regulation of thymocyte development. Mechanistically, mediates TCR-stimulated activation through recruiting MAP2K1/MEK1 to the Golgi and, thereby, facilitating the interaction of MAP2K1/MEK1 with its activator BRAF. Also plays an essential role in regulatory T-cell stability and function by recruiting the serine-threonine phosphatase catalytic subunit (PPP2CA) to the lysosome, thereby facilitating the interaction of PP2Ac with the mTORC1 component RPTOR and restricting glycolytic metabolism. Positively regulates TLR4 signaling activity in macrophage-mediated inflammation by acting as a molecular clamp to facilitate LPS-induced translocation of TLR4 to lipid rafts. In response to viral infection, facilitates the recruitment of TRAF3 to MAVS within mitochondria leading to IRF3 activation and interferon production. However, participates in the maintenance of immune homeostasis and the prevention of overzealous innate immunity by promoting 'Lys-48'-dependent ubiquitination of TBK1. This is TRAF3-interacting JNK-activating modulator (TRAF3IP3) from Homo sapiens (Human).